The following is a 516-amino-acid chain: Protein P54 (516 aa).

Positions 1-27 (MKKSLLSAVMLSSIALTAVGSPIAAAA) are cleaved as a signal peptide. The tract at residues 208–397 (ATAEDKKADL…PAPAPAPNPS (190 aa)) is disordered. Residues 210-236 (AEDKKADLNRKKAEAEAEQARIREQAR) are compositionally biased toward basic and acidic residues. Composition is skewed to low complexity over residues 237–247 (LAEQARQQAAQ) and 257–380 (QAAA…TVTP). Pro residues predominate over residues 381-395 (APTPTPTPAPAPAPN). In terms of domain architecture, NlpC/P60 spans 399–516 (SVNGAAIVAE…WYTPDFAVSM (118 aa)). Catalysis depends on cysteine 429, which acts as the Nucleophile. The active-site Proton acceptor is histidine 480. Residue histidine 492 is part of the active site.

Belongs to the peptidase C40 family.

It is found in the secreted. The protein localises to the cell wall. The protein is Protein P54 of Enterococcus faecium (Streptococcus faecium).